We begin with the raw amino-acid sequence, 232 residues long: Rho-related GTP-binding protein Rho6 (232 aa).

Residues 23 to 28 (QCGKTA), 38 to 45 (YPETYVPT), 67 to 71 (DTSGS), 125 to 128 (CKTD), and 169 to 170 (AF) each bind GTP. Positions 42–50 (YVPTVFENY) match the Effector region motif. C229 is modified (cysteine methyl ester). C229 is lipidated: S-geranylgeranyl cysteine. Residues 230–232 (SIM) constitute a propeptide, removed in mature form.

The protein belongs to the small GTPase superfamily. Rho family. Binds GRB7 and PLXNB1. Interacts with UBXD5. Interacts with PLXNA2. As to expression, mostly expressed in brain and liver.

The protein localises to the cell membrane. The protein resides in the cytoplasm. It is found in the cytoskeleton. In terms of biological role, lacks intrinsic GTPase activity. Has a low affinity for GDP, and constitutively binds GTP. Controls rearrangements of the actin cytoskeleton. Induces the Rac-dependent neuritic process formation in part by disruption of the cortical actin filaments. Causes the formation of many neuritic processes from the cell body with disruption of the cortical actin filaments. This chain is Rho-related GTP-binding protein Rho6 (RND1), found in Homo sapiens (Human).